The chain runs to 376 residues: MHLASSLFLLATLPFGFAAGKGKGKGKDNSDVGLDVLAKKAGLKYFGAATDTPGQRERAGLEDKYPEYDRIMWHSPEFGSTTPTNGQKWLFVEPERGVFNFTEGDVVASKARQHGKLLRCHALVWHSQLAPWVEETEWTPEELRKVIVDHITAVAGHYKGQCYAWDVVNEALNEDGTYRESVFYKVLGEEYIKLAFETAAKVDPKAKLYYNDYNLEWPSAKTEGAKRIVKLLKDAKIPIHGVGLQAHLIAEQHPTLDDHIAAIRGFTQLGVEVALTELDIRLKTPATEENLALQREAYKNVVGACVQVCGCVGVTIWDFYDPFSWVPYFFEGEGAPLLWFEDFSKHPAYYGVVEALTNKTRRSKRSISDRRAKLLA.

An N-terminal signal peptide occupies residues 1-18 (MHLASSLFLLATLPFGFA). One can recognise a GH10 domain in the interval 55–355 (QRERAGLEDK…HPAYYGVVEA (301 aa)). An N-linked (GlcNAc...) asparagine glycan is attached at asparagine 100. The active-site Proton donor is glutamate 170. Catalysis depends on glutamate 277, which acts as the Nucleophile. Residue asparagine 358 is glycosylated (N-linked (GlcNAc...) asparagine).

It belongs to the glycosyl hydrolase 10 (cellulase F) family.

The protein localises to the secreted. It catalyses the reaction Endohydrolysis of (1-&gt;4)-beta-D-xylosidic linkages in xylans.. It functions in the pathway glycan degradation; xylan degradation. Partial inhibition of activity is detected in the presence of Ag(+), Cu2(+) and SDS. Like most fungal xylanases, activity is completely inhibited by Hg(2+) since Hg(2+) could interact with tryptophan residues and oxidize the indole ring. Beta-mercaptoethanol enhances the enzymatic activity by counteracting the oxidation effects of the S-S linkage between cysteine residues. Endo-1,4-beta-xylanase involved in the hydrolysis of xylan, a major structural heterogeneous polysaccharide found in plant biomass representing the second most abundant polysaccharide in the biosphere, after cellulose. Is most active on birchwood xylan (defined as 100%), moderate on beechwood xylan (96.8%) and soluble wheat arabinoxylan (84.5%), and weak on insoluble wheat arabinoxylan (19.7%). Hydrolyzes substrates into a mixture of xylobiose and xylotriose, but no xylose. No activity was detected in the presence of barley beta-glucan, carboxymethyl cellulose-sodium (CMC-Na), and Avicel. Acts as an alkali-tolerant xylanase, exhibiting 68.8% of the activity at pH 9.0, and even 31.8% at pH 10.0. The polypeptide is Endo-1,4-beta-xylanase A (Humicola insolens (Soft-rot fungus)).